A 166-amino-acid polypeptide reads, in one-letter code: Cytochrome c-type biogenesis protein CcmE (166 aa).

At 1–7 (MTRKQKR) the chain is on the cytoplasmic side. Residues 8 to 28 (LALIASGAVVVSLAVGLVMFA) form a helical; Signal-anchor for type II membrane protein membrane-spanning segment. The Periplasmic segment spans residues 29–166 (LRDNIVFFYS…QTAPQGAQAY (138 aa)). Heme is bound by residues H122 and Y126. Residues 139–166 (GVWQEEGKSEGKPSAIPAQTAPQGAQAY) are disordered.

Belongs to the CcmE/CycJ family.

The protein resides in the cell inner membrane. In terms of biological role, heme chaperone required for the biogenesis of c-type cytochromes. Transiently binds heme delivered by CcmC and transfers the heme to apo-cytochromes in a process facilitated by CcmF and CcmH. The chain is Cytochrome c-type biogenesis protein CcmE from Methylocella silvestris (strain DSM 15510 / CIP 108128 / LMG 27833 / NCIMB 13906 / BL2).